The chain runs to 309 residues: Probable manganese-dependent inorganic pyrophosphatase (309 aa).

Mn(2+) contacts are provided by His-9, Asp-13, Asp-15, Asp-75, His-97, and Asp-149.

Belongs to the PPase class C family. Requires Mn(2+) as cofactor.

The protein localises to the cytoplasm. It catalyses the reaction diphosphate + H2O = 2 phosphate + H(+). In Staphylococcus haemolyticus (strain JCSC1435), this protein is Probable manganese-dependent inorganic pyrophosphatase.